Here is a 508-residue protein sequence, read N- to C-terminus: Cell death protein 3 (508 aa).

The propeptide occupies 1 to 223 (MMRQDRRNLL…FHEEDMNYVD (223 aa)). The CARD domain occupies 2–91 (MRQDRRNLLE…HELAAVLEPL (90 aa)). Disordered regions lie at residues 106–130 (PMSP…TRVH) and 148–184 (YTRA…SSAN). Positions 118–127 (LSPSTFSSPT) are enriched in polar residues. The segment covering 171 to 184 (SPSNSFQSQPSSAN) has biased composition (low complexity). Catalysis depends on residues His-317 and Cys-360. The interval 392 to 407 (GPLFNFLGCVRPQAQQ) is required for interaction with ced-4.

It belongs to the peptidase C14A family. In terms of assembly, the active form is probably a heterodimer of the p17 subunit with either the p15 or p13 subunit which are all derived from the precursor by autocatalysis. Interacts with octameric ced-4 (two ced-3 zymogens per one ced-4 octamer); the interaction causes the autoproteolytic cleavage and activation of ced-3. Processed ced-3 also interacts with ced-4 octamer to form a stable holoenzyme. Interacts (via large subunit p17) with csp-3; the interaction prevents ced-3 autoactivation and delays ced-4-induced ced-3 processing. Interacts (via large subunit p17 or small subunit p13 or p15) with csp-2; the interaction inhibits ced-3 autoactivation. Interacts (via propeptide) with nucleoporin npp-14; the interaction tethers ced-3 to the nuclear membrane and prevents its autoprocessing in absence of ced-4. Interacts with dct-1. May form a complex composed of ced-3, ced-4 and mac-1. In terms of processing, autocatalytic cleavage removes the propeptide and generates the catalytic subunit p17 and two non-catalytic subunits p15 and p13; autoproteolysis is induced by ced-4 oligomer. Cleaved by caspase csp-1 probably at Asp-146 and Asp-376.

It is found in the nucleus membrane. It localises to the perikaryon. The protein resides in the synapse. The protein localises to the mitochondrion. Its subcellular location is the cytoplasm. It is found in the perinuclear region. The catalysed reaction is Strict requirement for an Asp residue at position P1 and has a preferred cleavage sequence of Asp-Glu-Val-Asp-|-.. With respect to regulation, octameric ced-4 activates zymogen autoprocessing and enhances activity of processed ced-3. Zymogen autoactivation is inhibited by csp-3. csp-3 has no effect on active ced-3. Zymogen autoactivation is inhibited by csp-2. Inhibited by cysteine protease inhibitor iodoacetic acid (CH3COOI). Inhibited by benzyloxycarbonyl-DEVD-fluoro-methyl ketone (zDEVD-fmk). Inhibited by benzyloxycarbonyl-VAD-fluoro-methyl ketone (zVAD-fmk). Not inhibited by N-[N-(L-3-transcarboxirane-2-carbonyl)-leucyl]-agmatine (E-64) or by the serine and cysteine protease inhibitor L-1-chloro-3-[4-to-osylamido]-7-amino-2-heptanone (TLCK). Acts as a cysteine protease in controlling programmed cell death (apoptosis) by proteolytically activating or inactivating a wide range of substrates. Component of the egl-1, ced-9, ced-4 and ced-3 apoptotic signaling cascade required for the initiation of programmed cell death in cells fated to die during embryonic and postembryonic development. During oogenesis, required for germline apoptosis downstream of ced-9 and ced-4 but independently of egl-1. By cleaving and activating ced-8, promotes phosphatidylserine exposure on the surface of apoptotic cells; phosphatidylserine is a specific marker only present at the surface of apoptotic cells and acts as a specific signal for engulfment. By cleaving and converting dcr-1 into a deoxyribonuclease (DNase), promotes apoptotic chromosomal DNA fragmentation. By cleaving mitochondrial fission protein drp-1, may regulate the removal of mitochondria during apoptosis. During germline apoptosis, cleaves translation initiation factor ifg-1 (isoform p170) promoting cap-independent translation. During male tail morphogenesis, promotes apoptosis of the tail-spike cell downstream of ced-4 but independently of egl-1 and ced-9. By cleaving cnt-1, prevents the activation of the prosurvival akt-1/2 signaling pathway and thus promotes apoptosis. Downstream of ced-4, may play a role in sex-specific cell apoptosis by cleaving sex-determining protein fem-1. May regulate germline apoptosis in response to DNA damage, probably downstream of let-60/ras and mpk-1 pathway. Cleaves ced-9 in vitro. Cleaves csp-2 isoform b resulting in the removal of the propeptide and the generation of csp-2 subunit p31 in vitro. Independently of its apoptotic role has additional functions. Probably by cleaving and thereby activating actin-severing protein gsnl-1, required for the elimination of transient presynaptic components during larval development downstream of egl-1, ced-9 and ced-4 pathway. Together with ain-1, a component of the miRNA-induced-silencing complex (miRISC), regulates temporal cell fate patterning during larval development. Acts in cell fate patterning by cleaving heterochronic protein lin-28, likely promoting its degradation. Also cleaves heterochronic protein lin-14 and exonuclease disl-2 in vitro. Downstream of calreticulin crt-1 and ced-4 and independently of egl-1 and ced-9, plays a role in the initial steps of axonal regrowth following axotomy. Cleaves 14-3-3-like protein ftt-2, tubulin tbb-2 and calreticulin crt-1 in vitro. Plays also a role in resistance to S.typhimurium-mediated infection. The polypeptide is Cell death protein 3 (Caenorhabditis remanei (Caenorhabditis vulgaris)).